Here is a 131-residue protein sequence, read N- to C-terminus: UPF0102 protein CYA_0708 (131 aa).

It belongs to the UPF0102 family.

The sequence is that of UPF0102 protein CYA_0708 from Synechococcus sp. (strain JA-3-3Ab) (Cyanobacteria bacterium Yellowstone A-Prime).